The sequence spans 405 residues: Lipase lipl-1 (405 aa).

A signal peptide spans 1-20 (MRSWSTVMLAVLATAATVFG). A glycan (N-linked (GlcNAc...) asparagine) is linked at N66. The active-site Nucleophile is S169. The N-linked (GlcNAc...) asparagine glycan is linked to N273. Catalysis depends on charge relay system residues D344 and H376.

This sequence belongs to the AB hydrolase superfamily. Lipase family.

Its subcellular location is the secreted. It is found in the lysosome lumen. Its function is as follows. Lipase that, together with lipl-3, plays a role in the response to nutrient deprivation by controlling lipid metabolism. Specifically, involved in the breakdown of lipids during lipophagy, a process during which lipids contained in lipid droplets that have been delivered to lysosomes by autophagy are degraded. In Caenorhabditis elegans, this protein is Lipase lipl-1.